The sequence spans 536 residues: MENKRPIIAVVLSLFVLIGWSYLSEFMGWTPAPAPVEQNATAVQQKASEPVAQPVQTASAPAASSFAPTEGREVKVDTPLYTAVFQSQGGVLKHFRLKKYTESIEEGAPLVELVTPEAAGKAPMGLLLNGQPTWKLAAWQFEGDDLKLDGSGKGELVFVGEMDGVRFERTLSFDPETYLISEKVRLTDTAGVSRDVRLGMTLSTTSLSPEGGAYNLTRMAWYQDGFHQETSADDLRETGVKVDEGVNWGGVMCNYFMAVMAPAEGALPFKGVLEGGVYRSVVENSSLSIASGSSAEFGIGYYIGPKESDRLAAMPYHLDEALNYGWFTFLAKPLVSGLKFFYSYAGNYGVAIIILTILVKLLFWPLSQKSYKSMEQMKKLQPMVQKIKEKYGDDRQRMNQEVMELYKTYKVNPAGGCLPMLLQIPVFLGLYQGLLNAIELRHAPFIAHLPFTDIVWLADLSAKDPFYITPVVMGATMLLQQRLTPAPADPTQAKIMMFMPVVFTFMFLNFPAGLVVYWLVNNVLSIGQQWWMLRKS.

The chain crosses the membrane as a helical span at residues 7-27; it reads IIAVVLSLFVLIGWSYLSEFM. The segment at 43–70 is disordered; that stretch reads VQQKASEPVAQPVQTASAPAASSFAPTE. A compositionally biased stretch (low complexity) spans 58 to 68; it reads ASAPAASSFAP. The next 3 helical transmembrane spans lie at 346–366, 415–435, and 495–515; these read GNYGVAIIILTILVKLLFWPL, GGCLPMLLQIPVFLGLYQGLL, and IMMFMPVVFTFMFLNFPAGLV.

It belongs to the OXA1/ALB3/YidC family. Type 1 subfamily. As to quaternary structure, interacts with the Sec translocase complex via SecD. Specifically interacts with transmembrane segments of nascent integral membrane proteins during membrane integration.

It localises to the cell inner membrane. Functionally, required for the insertion and/or proper folding and/or complex formation of integral membrane proteins into the membrane. Involved in integration of membrane proteins that insert both dependently and independently of the Sec translocase complex, as well as at least some lipoproteins. Aids folding of multispanning membrane proteins. The protein is Membrane protein insertase YidC of Oleidesulfovibrio alaskensis (strain ATCC BAA-1058 / DSM 17464 / G20) (Desulfovibrio alaskensis).